Reading from the N-terminus, the 218-residue chain is Small ribosomal subunit protein mS34 (218 aa).

Residues 178-218 (RQKNGDPSTEEPMLSLERIRTDPWDYPENQEAKKKTKGTAV) form a disordered region.

It belongs to the mitochondrion-specific ribosomal protein mS34 family. As to quaternary structure, component of the mitochondrial ribosome small subunit (28S) which comprises a 12S rRNA and about 30 distinct proteins.

Its subcellular location is the mitochondrion. Its function is as follows. Required for mitochondrial translation, plays a role in maintaining the stability of the small ribosomal subunit and the 12S rRNA that are required for mitoribosome formation. The sequence is that of Small ribosomal subunit protein mS34 from Bos taurus (Bovine).